Consider the following 552-residue polypeptide: 3-hydroxy-3-methylglutaryl-coenzyme A reductase 1 (552 aa).

2 stretches are compositionally biased toward low complexity: residues Q79–Q99 and Q112–Q122. The interval Q79–P138 is disordered. A compositionally biased stretch (polar residues) spans T123 to K132. E237 serves as the catalytic Charge relay system. An N-linked (GlcNAc...) asparagine glycan is attached at N288. The Charge relay system role is filled by K369. The N-linked (GlcNAc...) asparagine glycan is linked to N375. D445 serves as the catalytic Charge relay system. The active-site Proton donor is the H543.

Belongs to the HMG-CoA reductase family.

The protein resides in the endoplasmic reticulum membrane. The catalysed reaction is (R)-mevalonate + 2 NADP(+) + CoA = (3S)-3-hydroxy-3-methylglutaryl-CoA + 2 NADPH + 2 H(+). It functions in the pathway metabolic intermediate biosynthesis; (R)-mevalonate biosynthesis; (R)-mevalonate from acetyl-CoA: step 3/3. This transmembrane glycoprotein is involved in the control of cholesterol biosynthesis. It is the rate-limiting enzyme of the sterol biosynthesis. This is 3-hydroxy-3-methylglutaryl-coenzyme A reductase 1 (hmgA) from Dictyostelium discoideum (Social amoeba).